We begin with the raw amino-acid sequence, 451 residues long: MREIVHIQIGQCGNQIGAKFWEMIGEEHGIDLAGSDRGASALQLERISVYYNEAYGRKYVPRAVLVDLEPGTMDSIRSSKLGALFQPDSFVHGNSGAGNNWAKGHYTEGAELIENVLEVVRHESESCDCLQGFQIVHSLGGGTGSGMGTLLMNKIREEYPDRIMNSFSVMPSPKVSDTVVEPYNAVLSIHQLIENADACFCIDNEALYDICFRTLKLTTPTYGDLNHLVSLTMSGITTSLRFPGQLNADLRKLAVNMVPFPRLHFFMPGFAPLTAQGSQQYRALSVAELTQQMFDARNTMAACDLRRGRYLTVACIFRGKMSTKEVDQQLLSVQTRNSSCFVEWIPNNVKVAVCDIPPRGLSMAATFIGNNTAIQEIFNRVSEHFSAMFKRKAFVHWYTSEGMDINEFGEAENNIHDLVSEYQQFQDAKAVLEEDEEVTEEAEMEPEDKGH.

An MREI motif motif is present at residues 1–4 (MREI). Residues Gln11, Glu69, Ser138, Gly142, Thr143, and Gly144 each contribute to the GTP site. Glu69 contributes to the Mg(2+) binding site. Phosphoserine; by CDK1 is present on Ser172. GTP is bound by residues Asn204 and Asn226. A disordered region spans residues 432-451 (LEEDEEVTEEAEMEPEDKGH). Residues 433-451 (EEDEEVTEEAEMEPEDKGH) show a composition bias toward acidic residues. Glu440 is subject to 5-glutamyl polyglutamate.

Belongs to the tubulin family. In terms of assembly, dimer of alpha and beta chains. A typical microtubule is a hollow water-filled tube with an outer diameter of 25 nm and an inner diameter of 15 nM. Alpha-beta heterodimers associate head-to-tail to form protofilaments running lengthwise along the microtubule wall with the beta-tubulin subunit facing the microtubule plus end conferring a structural polarity. Microtubules usually have 13 protofilaments but different protofilament numbers can be found in some organisms and specialized cells. Interacts with RANBP10. Mg(2+) serves as cofactor. Post-translationally, some glutamate residues at the C-terminus are polyglutamylated, resulting in polyglutamate chains on the gamma-carboxyl group. Polyglutamylation plays a key role in microtubule severing by spastin (SPAST). SPAST preferentially recognizes and acts on microtubules decorated with short polyglutamate tails: severing activity by SPAST increases as the number of glutamates per tubulin rises from one to eight, but decreases beyond this glutamylation threshold. Glutamylation is also involved in cilia motility. Some glutamate residues at the C-terminus are monoglycylated but not polyglycylated due to the absence of functional TTLL10 in human. Monoglycylation is mainly limited to tubulin incorporated into cilia and flagella axonemes, which is required for their stability and maintenance. Flagella glycylation controls sperm motility. Both polyglutamylation and monoglycylation can coexist on the same protein on adjacent residues, and lowering glycylation levels increases polyglutamylation, and reciprocally. In terms of processing, phosphorylated on Ser-172 by CDK1 during the cell cycle, from metaphase to telophase, but not in interphase. This phosphorylation inhibits tubulin incorporation into microtubules. As to expression, hematopoietic cell-specific. Major isotype in leukocytes, where it represents 50% of all beta-tubulins.

It is found in the cytoplasm. The protein resides in the cytoskeleton. Its function is as follows. Tubulin is the major constituent of microtubules, a cylinder consisting of laterally associated linear protofilaments composed of alpha- and beta-tubulin heterodimers. Microtubules grow by the addition of GTP-tubulin dimers to the microtubule end, where a stabilizing cap forms. Below the cap, tubulin dimers are in GDP-bound state, owing to GTPase activity of alpha-tubulin. The protein is Tubulin beta-1 chain (TUBB1) of Homo sapiens (Human).